Consider the following 296-residue polypeptide: Phosphatidylserine decarboxylase proenzyme (296 aa).

Active-site charge relay system; for autoendoproteolytic cleavage activity residues include Asp113, His169, and Ser256. The Schiff-base intermediate with substrate; via pyruvic acid; for decarboxylase activity role is filled by Ser256. Position 256 is a pyruvic acid (Ser); by autocatalysis (Ser256).

Belongs to the phosphatidylserine decarboxylase family. PSD-B subfamily. Prokaryotic type II sub-subfamily. Heterodimer of a large membrane-associated beta subunit and a small pyruvoyl-containing alpha subunit. Pyruvate serves as cofactor. In terms of processing, is synthesized initially as an inactive proenzyme. Formation of the active enzyme involves a self-maturation process in which the active site pyruvoyl group is generated from an internal serine residue via an autocatalytic post-translational modification. Two non-identical subunits are generated from the proenzyme in this reaction, and the pyruvate is formed at the N-terminus of the alpha chain, which is derived from the carboxyl end of the proenzyme. The autoendoproteolytic cleavage occurs by a canonical serine protease mechanism, in which the side chain hydroxyl group of the serine supplies its oxygen atom to form the C-terminus of the beta chain, while the remainder of the serine residue undergoes an oxidative deamination to produce ammonia and the pyruvoyl prosthetic group on the alpha chain. During this reaction, the Ser that is part of the protease active site of the proenzyme becomes the pyruvoyl prosthetic group, which constitutes an essential element of the active site of the mature decarboxylase.

It is found in the cell membrane. It catalyses the reaction a 1,2-diacyl-sn-glycero-3-phospho-L-serine + H(+) = a 1,2-diacyl-sn-glycero-3-phosphoethanolamine + CO2. Its pathway is phospholipid metabolism; phosphatidylethanolamine biosynthesis; phosphatidylethanolamine from CDP-diacylglycerol: step 2/2. Catalyzes the formation of phosphatidylethanolamine (PtdEtn) from phosphatidylserine (PtdSer). This Clostridium botulinum (strain Alaska E43 / Type E3) protein is Phosphatidylserine decarboxylase proenzyme.